The following is a 278-amino-acid chain: MSDVDAAVDLAAALGDIDTATPLVNSVTNNVTVNDVANITLHWGGLPVMSDDAREVDDMVATADGCLINMGTVDEDGEESMVVAGTAANEGDKPLVVDPVGVGATPTRTRVANRLLDELDVTILNGNHGEITALAGDDADVRGVESVGEYADIAETALSCARTHDTVVVASGETDIVASPEEAYEITAGHPLMAQIVGTGCMLGVTLATFAAGMENATPLDAALAGTVGFGLAGEKAAEEGEYNGPASYKTAFLDTVAGLEAAPDDPAGRIERVLSVT.

Substrate is bound at residue Met-49. Asn-125 and Ser-171 together coordinate ATP. Gly-198 provides a ligand contact to substrate.

The protein belongs to the Thz kinase family. It depends on Mg(2+) as a cofactor.

It carries out the reaction 5-(2-hydroxyethyl)-4-methylthiazole + ATP = 4-methyl-5-(2-phosphooxyethyl)-thiazole + ADP + H(+). It participates in cofactor biosynthesis; thiamine diphosphate biosynthesis; 4-methyl-5-(2-phosphoethyl)-thiazole from 5-(2-hydroxyethyl)-4-methylthiazole: step 1/1. In terms of biological role, catalyzes the phosphorylation of the hydroxyl group of 4-methyl-5-beta-hydroxyethylthiazole (THZ). The polypeptide is Hydroxyethylthiazole kinase (Natronomonas pharaonis (strain ATCC 35678 / DSM 2160 / CIP 103997 / JCM 8858 / NBRC 14720 / NCIMB 2260 / Gabara) (Halobacterium pharaonis)).